We begin with the raw amino-acid sequence, 240 residues long: MSSTSKVESAKKLAAYKAVDENFPKDAKVIGIGSGSTVIYAAERIGQLDNKDSFICIPTGFQSKQLIIDNGLRLGTIEQYPDIDIAFDGADEVDPQLNLIKGGGACLFQEKLVAASAKKFVVVADYRKKSDKLGQSWRQGVPIEIVPNSYSKIIQELSKKLGAKNVDLRQGGKAKAGPIITDNNNFLLDADFGEIEIDNVGKLHEQIKLLVGVVETGLFTNMANKAYFGEEDGSVSVWSK.

Substrate-binding positions include 34–37, 88–91, and 101–104; these read SGST, DGAD, and KGGG. E110 (proton acceptor) is an active-site residue. K128 serves as a coordination point for substrate.

The protein belongs to the ribose 5-phosphate isomerase family.

Its subcellular location is the cytoplasm. The enzyme catalyses aldehydo-D-ribose 5-phosphate = D-ribulose 5-phosphate. It functions in the pathway carbohydrate degradation; pentose phosphate pathway; D-ribose 5-phosphate from D-ribulose 5-phosphate (non-oxidative stage): step 1/1. Functionally, involved in the first step of the non-oxidative branch of the pentose phosphate pathway. It catalyzes the reversible conversion of ribose-5-phosphate to ribulose 5-phosphate. The chain is Ribose-5-phosphate isomerase (RKI1) from Candida albicans (strain SC5314 / ATCC MYA-2876) (Yeast).